We begin with the raw amino-acid sequence, 168 residues long: uncharacterized protein (168 aa).

Residues 18–73 are disordered; it reads RTTVKTKSHNPKTLYPNNKPRWESKLHAGPKGFQSSRTSEKPGRPDPDPEDDPPIP. Residues 55–64 show a composition bias toward basic and acidic residues; the sequence is TSEKPGRPDP. Helical transmembrane passes span 84–104 and 113–133; these read IVVS…VLEV and VPLW…ALGI.

The protein resides in the membrane. This is an uncharacterized protein from Arabidopsis thaliana (Mouse-ear cress).